The sequence spans 112 residues: Ferredoxin, plant-type (112 aa).

In terms of domain architecture, 2Fe-2S ferredoxin-type spans Y6–V97. Residues C41, C46, C49, and C81 each contribute to the [2Fe-2S] cluster site.

It belongs to the 2Fe2S plant-type ferredoxin family.

It participates in aromatic compound metabolism; catechol degradation. Its function is as follows. Ferredoxins are iron-sulfur proteins that transfer electrons in a wide variety of metabolic reactions. This Pseudomonas putida (Arthrobacter siderocapsulatus) protein is Ferredoxin, plant-type (xylT).